We begin with the raw amino-acid sequence, 213 residues long: MKGIIGRKLGMTTIYEDGKALGVTVIKAGPCTVVQKKTAAGGEYNAIQLGFEELSPERAKKLLTKPILKKFEAAKVKPHRILKEIRVENPDEYNVGDVIDAGIFKEGELVDVTGWTKGRGFTGAMKRWNFGGGEVTHGSKFHRELGSVGNHTEPAKIWKGKKMPGRYGNERVTVLNVKVVKVDAENGLIAIHGAVPGARGGLVIIRAAKRPRK.

This sequence belongs to the universal ribosomal protein uL3 family. As to quaternary structure, part of the 50S ribosomal subunit. Forms a cluster with proteins L14 and L19.

Its function is as follows. One of the primary rRNA binding proteins, it binds directly near the 3'-end of the 23S rRNA, where it nucleates assembly of the 50S subunit. This Kosmotoga olearia (strain ATCC BAA-1733 / DSM 21960 / TBF 19.5.1) protein is Large ribosomal subunit protein uL3.